A 494-amino-acid polypeptide reads, in one-letter code: Probable cytosol aminopeptidase (494 aa).

Mn(2+) contacts are provided by lysine 260 and aspartate 265. The active site involves lysine 272. Residues aspartate 283, aspartate 342, and glutamate 344 each contribute to the Mn(2+) site. Arginine 346 is an active-site residue.

The protein belongs to the peptidase M17 family. Mn(2+) is required as a cofactor.

The protein localises to the cytoplasm. The catalysed reaction is Release of an N-terminal amino acid, Xaa-|-Yaa-, in which Xaa is preferably Leu, but may be other amino acids including Pro although not Arg or Lys, and Yaa may be Pro. Amino acid amides and methyl esters are also readily hydrolyzed, but rates on arylamides are exceedingly low.. The enzyme catalyses Release of an N-terminal amino acid, preferentially leucine, but not glutamic or aspartic acids.. In terms of biological role, presumably involved in the processing and regular turnover of intracellular proteins. Catalyzes the removal of unsubstituted N-terminal amino acids from various peptides. The sequence is that of Probable cytosol aminopeptidase from Bacillus thuringiensis (strain Al Hakam).